The following is an 812-amino-acid chain: Conserved oligomeric Golgi complex subunit 6 (812 aa).

Residues 77-96 are compositionally biased toward low complexity; that stretch reads SHASTRTPSPAASPLSPPAT. 2 disordered regions span residues 77–100 and 665–688; these read SHAS…QRSS and SVAK…PQQQ. The span at 671 to 680 shows a compositional bias: basic and acidic residues; that stretch reads TETEKQDSHP.

It belongs to the COG6 family.

The protein localises to the golgi apparatus membrane. Functionally, acts as a component of the peripheral membrane COG complex that is involved in intra-Golgi protein trafficking. COG is located at the cis-Golgi, and regulates tethering of retrograde intra-Golgi vesicles and possibly a number of other membrane trafficking events. This chain is Conserved oligomeric Golgi complex subunit 6 (cog6), found in Aspergillus oryzae (strain ATCC 42149 / RIB 40) (Yellow koji mold).